Consider the following 923-residue polypeptide: MPFAIGQRWLSESENALGLGVITALDQRTVTIYFPAADETRIYAMAQAPLSRIVFSKGETLSHQAGWQGEILDVQNMNGLLFYLVKNPQDEDVIVQERDISPIISFSQAKDRLFSAQIDRSTHFALRYRTLCHQQAQFKSPLRGLRGTRASLIPHQLHIAAEVGNRVNPRVLLADEVGLGKTIEAGMILQNQLFAEKVQRVLIIVPETLQHQWLVEMLRRFNLHFALFDEERCNDFDLDAVNPFTTESLIICSLNWLETHPNRVELVLNAQFDCLIVDEAHHLVWSETSPSTAYLLVEQLARIIPSVLLLTATPEQLGQESHFARLRLLDPERFFDYQTFVKEQEHYQPVVNAVESLLANKALSAVEKNHISDLLLEQDVEPLFKAIASNNDEEQQRARQELIQALIDRHGTGRMLFRNTRQGVKGFPHRVYHQITLSEENDKIDWLIDFLKLHRNEKIFVICQTAATAIQLEQILREREAIRAAVFHEKMSIIERDRAAAYFADLENGAQVLLSSSIGSEGRNFQFAANLVLFDLPTNPDLLEQCIGRLDRIGQKRDVQVYVPCAKDSPQSRLARWYNEGLNAFEQTCPMGMALFSQFADELEKVRSNSTALSENEFSGLLKQTKTAREKLKIELEKGRDRLLELNSHGGEQAQALADQIADEDNSPELVNFALKLFDIIGVEQEDLGANSIVISPTGTMLVPDFPGLKEEGVTVTFDRELALAREEMEFLTWDHPMIRQGIDLVASGDIGKAAMALLVNKQLPAGTLLIELIYVVESQSPKGLQLNRFLPPTPIRLLLDNKGNNIGEQVAFETLHSKLKPLGKNITNQMVKMARSNIESLIMRGDQLVKSLAEPIIAEAKNQADQQLSAEINRLQALRAVNKNIRQSEIDILEQQRTQSLDELSKANWRLDCLRVIVTNKE.

The Helicase ATP-binding domain occupies 162 to 332; the sequence is EVGNRVNPRV…FARLRLLDPE (171 aa). Position 175–182 (175–182) interacts with ATP; the sequence is DEVGLGKT. The DEAH box signature appears at 278–281; sequence DEAH. The Helicase C-terminal domain maps to 443–597; sequence KIDWLIDFLK…TCPMGMALFS (155 aa).

This sequence belongs to the SNF2/RAD54 helicase family. RapA subfamily. Interacts with the RNAP. Has a higher affinity for the core RNAP than for the holoenzyme. Its ATPase activity is stimulated by binding to RNAP.

Functionally, transcription regulator that activates transcription by stimulating RNA polymerase (RNAP) recycling in case of stress conditions such as supercoiled DNA or high salt concentrations. Probably acts by releasing the RNAP, when it is trapped or immobilized on tightly supercoiled DNA. Does not activate transcription on linear DNA. Probably not involved in DNA repair. The chain is RNA polymerase-associated protein RapA from Haemophilus influenzae (strain ATCC 51907 / DSM 11121 / KW20 / Rd).